A 381-amino-acid chain; its full sequence is Cytochrome b (381 aa).

The next 4 membrane-spanning stretches (helical) occupy residues 33-53 (FGSL…FLAM), 77-98 (WLLR…FLHV), 113-133 (WNIG…GYVL), and 178-198 (FFAF…VHLL). Heme b is bound by residues histidine 83 and histidine 97. Positions 182 and 196 each coordinate heme b. An a ubiquinone-binding site is contributed by histidine 201. 4 consecutive transmembrane segments (helical) span residues 226–246 (IKDA…ALFS), 288–308 (LGGV…PLLH), 320–340 (VSQT…WIGG), and 347–367 (FIII…VMMP).

It belongs to the cytochrome b family. As to quaternary structure, the cytochrome bc1 complex contains 11 subunits: 3 respiratory subunits (MT-CYB, CYC1 and UQCRFS1), 2 core proteins (UQCRC1 and UQCRC2) and 6 low-molecular weight proteins (UQCRH/QCR6, UQCRB/QCR7, UQCRQ/QCR8, UQCR10/QCR9, UQCR11/QCR10 and a cleavage product of UQCRFS1). This cytochrome bc1 complex then forms a dimer. Heme b serves as cofactor.

Its subcellular location is the mitochondrion inner membrane. In terms of biological role, component of the ubiquinol-cytochrome c reductase complex (complex III or cytochrome b-c1 complex) that is part of the mitochondrial respiratory chain. The b-c1 complex mediates electron transfer from ubiquinol to cytochrome c. Contributes to the generation of a proton gradient across the mitochondrial membrane that is then used for ATP synthesis. In Dasyurus hallucatus (Northern quoll), this protein is Cytochrome b (MT-CYB).